The chain runs to 507 residues: MNNKGRTPGSAGRTVRSSAQQNGLTMRKRDMTPTRNTNLLPNATFVGDRFLGVRLDQDELDHANHLMTSKLYSNKENLNNSMSEPNSPEKKSVEGEALKQMMRHKSTGALTDADDGDRILCYKKNLAPPPAIGYINQAKVLYSTNSVINPASSVKKSTRHVKETATKVLDGPGLTKDLYSRHLDWGCHNWVAVALGHELYLWNTETCVIKNLFEDNAPTNEGLITSVRWSQEGRYISLGYASGAVKIYDPNRPKTTEYVRELRTLRVGGASRCASIAWRKQGVMTCGYKSGDIVNHDVRISQHVVSSWGGDNGHCRDVTALEWSADENMCVSGSSDRTAKIWDGRHVRGSTVIQDPEPMFTIDEHTGQVRTAQFCSFRDGILATGGGINDGTVKLWDVKRQFQKVRELNVCETGGVGGIVFNRPYSEMLTASDDGFLRIYRFNANYKLSHEIQASNEPIMDLVGSPFDEVLIGDMEETLKVFQLFNVDKSTNILDRTAPKNVGLNVR.

Disordered stretches follow at residues 1–39 and 74–95; these read MNNKGRTPGSAGRTVRSSAQQNGLTMRKRDMTPTRNTNL and NKENLNNSMSEPNSPEKKSVEG. Composition is skewed to polar residues over residues 15-24 and 74-86; these read VRSSAQQNGL and NKENLNNSMSEPN. WD repeat units lie at residues 219 to 258, 313 to 352, 364 to 406, and 411 to 450; these read TNEGLITSVRWSQEGRYISLGYASGAVKIYDPNRPKTTEY, GHCRDVTALEWSADENMCVSGSSDRTAKIWDGRHVRGSTV, EHTG…QKVR, and CETGGVGGIVFNRPYSEMLTASDDGFLRIYRFNANYKLSH.

The protein belongs to the WD repeat CDC20/Fizzy family.

Its subcellular location is the chromosome. It localises to the cytoplasm. Its function is as follows. Plays a role in metaphase-anaphase transition during meiosis I. Required for embryonic anterior-posterior axis formation. This Caenorhabditis elegans protein is WD repeat-containing protein fzy-1.